The following is a 792-amino-acid chain: Coiled-coil domain-containing protein R3HCC1L (792 aa).

Positions 7–27 (RCRVRARRPDMALYVPKARRG) are EJC-binding motif; may mediate interaction with the EJC. Disordered regions lie at residues 32–61 (KTGDEEESCGSPNSVVKEKQKESSLSQKEV) and 527–567 (EFKT…TSHT). Ser-688 is modified (phosphoserine). Thr-712 is subject to Phosphothreonine. Residues 751 to 783 (RSKQSKTEREAELKKLQEARERKRLEAKQREDI) are a coiled coil. Residues 772-792 (RKRLEAKQREDIWEGRDQSTV) are disordered.

As to quaternary structure, may interact with the exon junction complex (EJC) composed at least of CASC3, EIF4A3, MAGOH and RBM8A. In terms of tissue distribution, expressed in placenta.

In Homo sapiens (Human), this protein is Coiled-coil domain-containing protein R3HCC1L (R3HCC1L).